The following is a 159-amino-acid chain: Endoribonuclease YbeY (159 aa).

The Zn(2+) site is built by His-119, His-123, and His-129.

The protein belongs to the endoribonuclease YbeY family. Requires Zn(2+) as cofactor.

It is found in the cytoplasm. Single strand-specific metallo-endoribonuclease involved in late-stage 70S ribosome quality control and in maturation of the 3' terminus of the 16S rRNA. The polypeptide is Endoribonuclease YbeY (Acinetobacter baylyi (strain ATCC 33305 / BD413 / ADP1)).